The following is a 591-amino-acid chain: General transcription and DNA repair factor IIH subunit TFB1-1 (591 aa).

BSD domains follow at residues 112 to 166 and 191 to 243; these read STSS…GKDS and RTNR…YLYS.

The protein belongs to the TFB1 family. Component of the 7-subunit TFIIH core complex composed of XPB, XPD, TFB1/GTF2H1, GTF2H2/P44, TFB4/GTF2H3, TFB2/GTF2H4 and TFB5/GTF2H5, which is active in NER. The core complex associates with the 3-subunit CDK-activating kinase (CAK) module composed of CYCH1/cyclin H1, CDKD and MAT1/At4g30820 to form the 10-subunit holoenzyme (holo-TFIIH) active in transcription.

The protein localises to the nucleus. Functionally, component of the general transcription and DNA repair factor IIH (TFIIH) core complex, which is involved in general and transcription-coupled nucleotide excision repair (NER) of damaged DNA and, when complexed to CAK, in RNA transcription by RNA polymerase II. In NER, TFIIH acts by opening DNA around the lesion to allow the excision of the damaged oligonucleotide and its replacement by a new DNA fragment. In transcription, TFIIH has an essential role in transcription initiation. When the pre-initiation complex (PIC) has been established, TFIIH is required for promoter opening and promoter escape. Phosphorylation of the C-terminal tail (CTD) of the largest subunit of RNA polymerase II by the kinase module CAK controls the initiation of transcription. The sequence is that of General transcription and DNA repair factor IIH subunit TFB1-1 from Arabidopsis thaliana (Mouse-ear cress).